Consider the following 117-residue polypeptide: MDWTWRILFLVAAATGAHSQVQLVQSGAEVKKPGASVKVSCKASGYTFTGYYMHWVRQAPGQGLEWMGWINPNSGGTNYAQKFQGWVTMTRDTSISTAYMELSRLRSDDTAVYYCAR.

Residues Met-1–Ser-19 form the signal peptide. Gln-20 is subject to Pyrrolidone carboxylic acid. The segment at Gln-20–Ser-44 is framework-1. The Ig-like domain maps to Gln-20–Arg-117. Cys-41 and Cys-115 are oxidised to a cystine. A complementarity-determining-1 region spans residues Gly-45–Tyr-52. The tract at residues Met-53–Trp-69 is framework-2. Positions Ile-70 to Thr-77 are complementarity-determining-2. The interval Asn-78–Cys-115 is framework-3. The segment at Ala-116–Arg-117 is complementarity-determining-3.

As to quaternary structure, immunoglobulins are composed of two identical heavy chains and two identical light chains; disulfide-linked.

It is found in the secreted. It localises to the cell membrane. In terms of biological role, v region of the variable domain of immunoglobulin heavy chains that participates in the antigen recognition. Immunoglobulins, also known as antibodies, are membrane-bound or secreted glycoproteins produced by B lymphocytes. In the recognition phase of humoral immunity, the membrane-bound immunoglobulins serve as receptors which, upon binding of a specific antigen, trigger the clonal expansion and differentiation of B lymphocytes into immunoglobulins-secreting plasma cells. Secreted immunoglobulins mediate the effector phase of humoral immunity, which results in the elimination of bound antigens. The antigen binding site is formed by the variable domain of one heavy chain, together with that of its associated light chain. Thus, each immunoglobulin has two antigen binding sites with remarkable affinity for a particular antigen. The variable domains are assembled by a process called V-(D)-J rearrangement and can then be subjected to somatic hypermutations which, after exposure to antigen and selection, allow affinity maturation for a particular antigen. This Homo sapiens (Human) protein is Immunoglobulin heavy variable 1-2.